The chain runs to 417 residues: UDP-N-acetylglucosamine 1-carboxyvinyltransferase (417 aa).

Phosphoenolpyruvate is bound at residue 22–23 (KN). UDP-N-acetyl-alpha-D-glucosamine is bound at residue R91. C115 functions as the Proton donor in the catalytic mechanism. C115 bears the 2-(S-cysteinyl)pyruvic acid O-phosphothioketal mark. UDP-N-acetyl-alpha-D-glucosamine is bound by residues 120–124 (RPVDL), D304, and I326.

Belongs to the EPSP synthase family. MurA subfamily.

It is found in the cytoplasm. It catalyses the reaction phosphoenolpyruvate + UDP-N-acetyl-alpha-D-glucosamine = UDP-N-acetyl-3-O-(1-carboxyvinyl)-alpha-D-glucosamine + phosphate. Its pathway is cell wall biogenesis; peptidoglycan biosynthesis. In terms of biological role, cell wall formation. Adds enolpyruvyl to UDP-N-acetylglucosamine. This chain is UDP-N-acetylglucosamine 1-carboxyvinyltransferase, found in Nitratidesulfovibrio vulgaris (strain DP4) (Desulfovibrio vulgaris).